Here is a 220-residue protein sequence, read N- to C-terminus: Deoxyribose-phosphate aldolase (220 aa).

The Proton donor/acceptor role is filled by Asp89. The Schiff-base intermediate with acetaldehyde role is filled by Lys151. The active-site Proton donor/acceptor is the Lys180.

The protein belongs to the DeoC/FbaB aldolase family. DeoC type 1 subfamily.

It is found in the cytoplasm. The enzyme catalyses 2-deoxy-D-ribose 5-phosphate = D-glyceraldehyde 3-phosphate + acetaldehyde. It participates in carbohydrate degradation; 2-deoxy-D-ribose 1-phosphate degradation; D-glyceraldehyde 3-phosphate and acetaldehyde from 2-deoxy-alpha-D-ribose 1-phosphate: step 2/2. In terms of biological role, catalyzes a reversible aldol reaction between acetaldehyde and D-glyceraldehyde 3-phosphate to generate 2-deoxy-D-ribose 5-phosphate. In Staphylococcus epidermidis (strain ATCC 12228 / FDA PCI 1200), this protein is Deoxyribose-phosphate aldolase.